We begin with the raw amino-acid sequence, 119 residues long: U-scoloptoxin(16)-Er11a (119 aa).

Positions M1–S19 are cleaved as a signal peptide.

Belongs to the scoloptoxin-16 family. Post-translationally, contains 4 disulfide bonds. Expressed by the venom gland.

The protein localises to the secreted. In Ethmostigmus rubripes (Giant centipede), this protein is U-scoloptoxin(16)-Er11a.